The following is a 676-amino-acid chain: ATP-dependent zinc metalloprotease FtsH (676 aa).

Residues 1-12 (MSFFDKIFKKFH) are Cytoplasmic-facing. Residues 13–33 (MGVLYFAVILIGATFIYCYFT) traverse the membrane as a helical segment. At 34–115 (KHEKKDNNTF…DPRPWNGYEH (82 aa)) the chain is on the extracellular side. Residues 116 to 136 (VFWVFRQCLTMLFFYCFFLFF) form a helical membrane-spanning segment. The Cytoplasmic portion of the chain corresponds to 137–676 (ADTIKQMGQE…EVLSTDSEQT (540 aa)). 212–219 (GPPGTGKT) contributes to the ATP binding site. H433 provides a ligand contact to Zn(2+). Residue E434 is part of the active site. 2 residues coordinate Zn(2+): H437 and D509. A disordered region spans residues 610 to 676 (EKEETNAPTQ…EVLSTDSEQT (67 aa)). Over residues 615-636 (NAPTQTTSQMSSNNETTNTDKT) the composition is skewed to polar residues. Residues 650 to 667 (NQESNESNPNNNEKASPE) show a composition bias toward low complexity.

This sequence in the central section; belongs to the AAA ATPase family. In the C-terminal section; belongs to the peptidase M41 family. Homohexamer. Requires Zn(2+) as cofactor.

The protein resides in the cell membrane. In terms of biological role, acts as a processive, ATP-dependent zinc metallopeptidase for both cytoplasmic and membrane proteins. Plays a role in the quality control of integral membrane proteins. This Aster yellows witches'-broom phytoplasma (strain AYWB) protein is ATP-dependent zinc metalloprotease FtsH.